The sequence spans 693 residues: Elongation factor G (693 aa).

One can recognise a tr-type G domain in the interval 8–284; it reads HMVRNIGIAA…AVIDYLPAPD (277 aa). GTP is bound by residues 17–24, 81–85, and 135–138; these read AHIDAGKT, DTPGH, and NKMD.

This sequence belongs to the TRAFAC class translation factor GTPase superfamily. Classic translation factor GTPase family. EF-G/EF-2 subfamily.

It is found in the cytoplasm. Its function is as follows. Catalyzes the GTP-dependent ribosomal translocation step during translation elongation. During this step, the ribosome changes from the pre-translocational (PRE) to the post-translocational (POST) state as the newly formed A-site-bound peptidyl-tRNA and P-site-bound deacylated tRNA move to the P and E sites, respectively. Catalyzes the coordinated movement of the two tRNA molecules, the mRNA and conformational changes in the ribosome. The sequence is that of Elongation factor G from Nautilia profundicola (strain ATCC BAA-1463 / DSM 18972 / AmH).